We begin with the raw amino-acid sequence, 286 residues long: Putative S-adenosyl-L-methionine-dependent methyltransferase FRAAL3718 (286 aa).

Residues aspartate 122 and 151–152 (DL) each bind S-adenosyl-L-methionine.

This sequence belongs to the UPF0677 family.

Functionally, exhibits S-adenosyl-L-methionine-dependent methyltransferase activity. The sequence is that of Putative S-adenosyl-L-methionine-dependent methyltransferase FRAAL3718 from Frankia alni (strain DSM 45986 / CECT 9034 / ACN14a).